The primary structure comprises 597 residues: MSKPSLDLQILTLPDNPGVYQYYDKDGKILYVGKAKNLKKRVSSYFNKIHDTAKTNVLVKKIVTIKHIVVPTETDALLLENNLIKTLQPRYNVLLRDDKSYPWICIKKEPFSRIFLTRRMVKDGSEYFGPYTNFKMVYTILDLIKELYPLRTCNYDLSQSNIDSGKFKVCLEYHIGNCKGPCEGLEPLEEYQRQVNAIREILKGNFKESLKDFKKLMNNYAQNLQFEEAQKIKEKIEVLENYQSRSTIVNPKITNIDVFSIISDESAAYVNFLQISHGSIIRSHTLEMKKKLDESDEELLELAIIELRERFQLMSKEIIVPFEIDLGENIKTTVPQLGDKKQILDLSIRNAKFYRIEQLKQLQIVDPDRHVNRIMAQMQKDLRLPVEPRHIECFDNSNIQGTNPVAACVVFKDGKPSKKDYRHFNVKTVEGPDDFASMTEIVYRRYKRLLDENQPLPQLIIIDGGKGQLSSALKSIDELGLRGKVAIIGIAKRLEELFYPGDSIPLYLDKKSETLKVIQQLRNEAHRFGITFHRDKRSKAALNSSVESIPGIGEKTMLTLIQHFKSVKRLKLATEKEISAVVGVSKAKKIVDFYKTN.

The region spanning 15–93 (DNPGVYQYYD…IKTLQPRYNV (79 aa)) is the GIY-YIG domain. The region spanning 207–242 (KESLKDFKKLMNNYAQNLQFEEAQKIKEKIEVLENY) is the UVR domain.

This sequence belongs to the UvrC family. As to quaternary structure, interacts with UvrB in an incision complex.

The protein resides in the cytoplasm. Its function is as follows. The UvrABC repair system catalyzes the recognition and processing of DNA lesions. UvrC both incises the 5' and 3' sides of the lesion. The N-terminal half is responsible for the 3' incision and the C-terminal half is responsible for the 5' incision. The polypeptide is UvrABC system protein C (Flavobacterium johnsoniae (strain ATCC 17061 / DSM 2064 / JCM 8514 / BCRC 14874 / CCUG 350202 / NBRC 14942 / NCIMB 11054 / UW101) (Cytophaga johnsonae)).